Here is a 311-residue protein sequence, read N- to C-terminus: Small ribosomal subunit biogenesis GTPase RsgA (311 aa).

The 163-residue stretch at Leu77–Phe239 folds into the CP-type G domain. Residues Asn126–Asp129 and Gly180–Thr188 contribute to the GTP site. Positions 263, 268, 270, and 276 each coordinate Zn(2+).

Belongs to the TRAFAC class YlqF/YawG GTPase family. RsgA subfamily. In terms of assembly, monomer. Associates with 30S ribosomal subunit, binds 16S rRNA. Zn(2+) serves as cofactor.

The protein localises to the cytoplasm. Its function is as follows. One of several proteins that assist in the late maturation steps of the functional core of the 30S ribosomal subunit. Helps release RbfA from mature subunits. May play a role in the assembly of ribosomal proteins into the subunit. Circularly permuted GTPase that catalyzes slow GTP hydrolysis, GTPase activity is stimulated by the 30S ribosomal subunit. The polypeptide is Small ribosomal subunit biogenesis GTPase RsgA (Azobacteroides pseudotrichonymphae genomovar. CFP2).